The following is a 351-amino-acid chain: Prostaglandin reductase 2 (351 aa).

99-100 (FY) serves as a coordination point for substrate. NADP(+) contacts are provided by residues 165–168 (GACG), Lys-192, Tyr-208, Asn-231, 253–259 (CGQISQY), 287–289 (FTV), and Asn-337. 288 to 290 (TVL) serves as a coordination point for substrate.

Belongs to the NADP-dependent oxidoreductase L4BD family. Monomer. Widely expressed with highest levels in adipose tissues.

The protein localises to the cytoplasm. It catalyses the reaction 13,14-dihydro-15-oxo-prostaglandin E2 + NAD(+) = 15-oxoprostaglandin E2 + NADH + H(+). It carries out the reaction 13,14-dihydro-15-oxo-prostaglandin E2 + NADP(+) = 15-oxoprostaglandin E2 + NADPH + H(+). The catalysed reaction is 13,14-dihydro-15-oxo-PGF2alpha + NADP(+) = 15-oxoprostaglandin F2alpha + NADPH + H(+). The enzyme catalyses 13,14-dihydro-15-oxo-prostaglandin E1 + NADP(+) = 15-oxoprostaglandin E1 + NADPH + H(+). It catalyses the reaction 13,14-dihydro-15-oxo-prostaglandin F1alpha + NADP(+) = 15-oxoprostaglandin F1alpha + NADPH + H(+). Functions as 15-oxo-prostaglandin 13-reductase and acts on 15-keto-PGE1, 15-keto-PGE2, 15-keto-PGE1-alpha and 15-keto-PGE2-alpha with highest activity towards 15-keto-PGE2. Overexpression represses transcriptional activity of PPARG and inhibits adipocyte differentiation. This is Prostaglandin reductase 2 from Mus musculus (Mouse).